A 305-amino-acid polypeptide reads, in one-letter code: Serine/threonine-protein kinase 16 (305 aa).

A lipid anchor (N-myristoyl glycine) is attached at G2. Residues C6 and C8 are each lipidated (S-palmitoyl cysteine). In terms of domain architecture, Protein kinase spans 20–293 (YLFIQKLGEG…PLLLSQLEAL (274 aa)). ATP is bound by residues 26-34 (LGEGGFSYV) and K49. The Proton acceptor role is filled by D148. The tract at residues 166 to 202 (DLGSMNQACIHVEGSRQALTLQDWAAQRCTISYRAPE) is activation loop. T185 is modified (phosphothreonine; by autocatalysis). The residue at position 197 (S197) is a Phosphoserine; by autocatalysis. The residue at position 198 (Y198) is a Phosphotyrosine; by autocatalysis.

It belongs to the protein kinase superfamily. Ser/Thr protein kinase family. In terms of assembly, monomer. Interacts with DRG1 (via its N-terminal); the interaction phosphorylates DRG1. Mainly autophosphorylated on serine/threonine residues. Also autophosphorylated on Tyr-198. In terms of processing, it is uncertain whether palmitoylation is on Cys-6 and/or Cys-8. Ubiquitously expressed at very low levels.

It is found in the cytoplasm. It localises to the perinuclear region. The protein resides in the membrane. The enzyme catalyses L-seryl-[protein] + ATP = O-phospho-L-seryl-[protein] + ADP + H(+). It carries out the reaction L-threonyl-[protein] + ATP = O-phospho-L-threonyl-[protein] + ADP + H(+). It catalyses the reaction L-tyrosyl-[protein] + ATP = O-phospho-L-tyrosyl-[protein] + ADP + H(+). Functionally, membrane-associated protein kinase that phosphorylates on serine and threonine residues. In vitro substrates include DRG1, ENO1 and EIF4EBP1. Also autophosphorylates. May be involved in secretory vesicle trafficking or intracellular signaling. May have a role in regulating stromal-epithelial interactions that occur during ductal morphogenesis in the mammary gland. May be involved in TGF-beta signaling. Able to autophosphorylate on Tyr residue; it is however unclear whether it has tyrosine-protein kinase toward other proteins. The sequence is that of Serine/threonine-protein kinase 16 (STK16) from Homo sapiens (Human).